We begin with the raw amino-acid sequence, 242 residues long: ATP synthase subunit a (242 aa).

Helical transmembrane passes span serine 29–tyrosine 49, phenylalanine 84–threonine 104, isoleucine 114–valine 134, phenylalanine 140–isoleucine 160, valine 189–methionine 209, and valine 210–leucine 230.

Belongs to the ATPase A chain family. In terms of assembly, F-type ATPases have 2 components, CF(1) - the catalytic core - and CF(0) - the membrane proton channel. CF(1) has five subunits: alpha(3), beta(3), gamma(1), delta(1), epsilon(1). CF(0) has three main subunits: a(1), b(2) and c(9-12). The alpha and beta chains form an alternating ring which encloses part of the gamma chain. CF(1) is attached to CF(0) by a central stalk formed by the gamma and epsilon chains, while a peripheral stalk is formed by the delta and b chains.

It is found in the cell inner membrane. In terms of biological role, key component of the proton channel; it plays a direct role in the translocation of protons across the membrane. This chain is ATP synthase subunit a, found in Rickettsia felis (strain ATCC VR-1525 / URRWXCal2) (Rickettsia azadi).